A 217-amino-acid chain; its full sequence is DNA helicase assembly protein (217 aa).

This sequence belongs to the Tequatrovirus DNA helicase assembly protein family. As to quaternary structure, monomer. Homohexamer; when associated with DNA. Interacts (via C-terminus) with the DnaB-like replicative helicase (via C-terminus); this interaction brings about the rapid assembly of the helicase onto ssDNA. Interacts (via C-terminus) with the single-stranded DNA-binding protein; a ternary complex between the helicase assembly protein, the single-stranded DNA-binding protein and ssDNA is an obligatory intermediate in the helicase loading mechanism. Interacts with the viral DNA polymerase. Binds to single and double-stranded DNA. Part of the replicase complex that includes the DNA polymerase, the polymerase clamp, the clamp loader complex, the single-stranded DNA binding protein (SSB), the primase, the DnaB-like replicative helicase and the helicase assembly factor.

Functionally, DNA helicase loader protein that participates in viral DNA replication, recombination, and repair. At the fork, required for loading of the replicative helicase onto DNA protected by the ssDNA-binding protein. Coordinates simultaneous synthesis of leading- and lagging-strands. The protein is DNA helicase assembly protein of Enterobacteria phage T4 (Bacteriophage T4).